The primary structure comprises 576 residues: 2-succinyl-5-enolpyruvyl-6-hydroxy-3-cyclohexene-1-carboxylate synthase (576 aa).

Belongs to the TPP enzyme family. MenD subfamily. In terms of assembly, homodimer. Requires Mg(2+) as cofactor. Mn(2+) is required as a cofactor. The cofactor is thiamine diphosphate.

The catalysed reaction is isochorismate + 2-oxoglutarate + H(+) = 5-enolpyruvoyl-6-hydroxy-2-succinyl-cyclohex-3-ene-1-carboxylate + CO2. It participates in quinol/quinone metabolism; 1,4-dihydroxy-2-naphthoate biosynthesis; 1,4-dihydroxy-2-naphthoate from chorismate: step 2/7. Its pathway is quinol/quinone metabolism; menaquinone biosynthesis. Its function is as follows. Catalyzes the thiamine diphosphate-dependent decarboxylation of 2-oxoglutarate and the subsequent addition of the resulting succinic semialdehyde-thiamine pyrophosphate anion to isochorismate to yield 2-succinyl-5-enolpyruvyl-6-hydroxy-3-cyclohexene-1-carboxylate (SEPHCHC). The protein is 2-succinyl-5-enolpyruvyl-6-hydroxy-3-cyclohexene-1-carboxylate synthase of Aliivibrio fischeri (strain ATCC 700601 / ES114) (Vibrio fischeri).